Consider the following 93-residue polypeptide: Pyrimidine/purine nucleoside phosphorylase (93 aa).

It belongs to the nucleoside phosphorylase PpnP family.

It catalyses the reaction a purine D-ribonucleoside + phosphate = a purine nucleobase + alpha-D-ribose 1-phosphate. It carries out the reaction adenosine + phosphate = alpha-D-ribose 1-phosphate + adenine. The enzyme catalyses cytidine + phosphate = cytosine + alpha-D-ribose 1-phosphate. The catalysed reaction is guanosine + phosphate = alpha-D-ribose 1-phosphate + guanine. It catalyses the reaction inosine + phosphate = alpha-D-ribose 1-phosphate + hypoxanthine. It carries out the reaction thymidine + phosphate = 2-deoxy-alpha-D-ribose 1-phosphate + thymine. The enzyme catalyses uridine + phosphate = alpha-D-ribose 1-phosphate + uracil. The catalysed reaction is xanthosine + phosphate = alpha-D-ribose 1-phosphate + xanthine. In terms of biological role, catalyzes the phosphorolysis of diverse nucleosides, yielding D-ribose 1-phosphate and the respective free bases. Can use uridine, adenosine, guanosine, cytidine, thymidine, inosine and xanthosine as substrates. Also catalyzes the reverse reactions. The polypeptide is Pyrimidine/purine nucleoside phosphorylase (Pseudomonas syringae pv. tomato (strain ATCC BAA-871 / DC3000)).